Consider the following 548-residue polypeptide: Fluconazole resistance protein 1 (548 aa).

A disordered region spans residues 30–94 (SAREDETRKP…WNGPSDPENP (65 aa)). Positions 31–51 (AREDETRKPENTDKKECKPDY) are enriched in basic and acidic residues. The span at 60-73 (SCSESSTDSDSSGS) shows a compositional bias: low complexity. 12 helical membrane-spanning segments follow: residues 104–124 (LVVF…SIYT), 139–159 (VVAT…PIIF), 179–199 (FFFM…GLIV), 203–223 (ISGI…ADII), 230–250 (LVLG…PLLG), 261–281 (FIFW…AFFF), 347–367 (IAVA…VFVG), 376–396 (VGLA…LFGI), 416–436 (FLIV…LFGW), 440–460 (VHWI…FNIF), 476–496 (ASVF…FPLF), and 511–531 (VAWG…IPFI).

The protein belongs to the major facilitator superfamily.

The protein localises to the membrane. Probable efflux transporter. Confers resistance to the azole derivative fluconazole (FCZ). This Saccharomyces cerevisiae (strain ATCC 204508 / S288c) (Baker's yeast) protein is Fluconazole resistance protein 1 (FLR1).